We begin with the raw amino-acid sequence, 129 residues long: Small ribosomal subunit protein uS8 (129 aa).

The protein belongs to the universal ribosomal protein uS8 family. In terms of assembly, part of the 30S ribosomal subunit. Contacts proteins S5 and S12.

In terms of biological role, one of the primary rRNA binding proteins, it binds directly to 16S rRNA central domain where it helps coordinate assembly of the platform of the 30S subunit. This Bdellovibrio bacteriovorus (strain ATCC 15356 / DSM 50701 / NCIMB 9529 / HD100) protein is Small ribosomal subunit protein uS8.